Reading from the N-terminus, the 439-residue chain is MSATTPAAAAPKKPFYRVLYIQVLVAIVLGVIVGWLWPEIGKNDWIKALGDGFVKLIKMVIAPVIFCTVVSGIAHVSEVKKVGRVAIKALIYFEIVSTFALALGLIVANVIQPGAGFQGQTNAAAVANYAKQASEMKSVDFVLHIIPDTVVGAFAQGEILQVLLFSILFGIALMSLGERGHTMRAFVDDAAHAIFGVIAIVVKAAPIGAFGAMAFTIGRYGPQALGNLAGLIATFYLTALAFVIIVLGIIARIAGFSIFKFLTYIKDELLIVLGTSSSESALPQMMEKLERLGCSKPVVGLVVPTGYSFNLDGTNIYMTLATLFIAQAMNVHLSFGEQITILLVAMLTSKGASGITGAGFITLAGTLAAVRPELVPGMAIVLGIDKFMSECRALTNLCGNGVACVIVAWWEGELDRDKLRAALDRDIDPSDVEVAVTTG.

6 helical membrane passes run 18–38 (VLYIQVLVAIVLGVIVGWLWP), 56–76 (LIKMVIAPVIFCTVVSGIAHV), 91–111 (IYFEIVSTFALALGLIVANVI), 157–177 (GEILQVLLFSILFGIALMSLG), 193–213 (AIFGVIAIVVKAAPIGAFGAM), and 231–251 (LIATFYLTALAFVIIVLGIIA).

This sequence belongs to the dicarboxylate/amino acid:cation symporter (DAACS) (TC 2.A.23) family.

It localises to the cell inner membrane. In terms of biological role, responsible for the transport of dicarboxylates such as succinate, fumarate, and malate from the periplasm across the membrane. The chain is C4-dicarboxylate transport protein 1 from Bradyrhizobium sp. (strain ORS 278).